We begin with the raw amino-acid sequence, 874 residues long: Coatomer subunit gamma-1 (874 aa).

Basic and acidic residues predominate over residues 1–11 (MLKKFDKKDEE). The disordered stretch occupies residues 1-21 (MLKKFDKKDEESGGGSNPLQH). HEAT repeat units follow at residues 64–101 (TEATEAFFAMTKLFQSNDPTLRRMCYLTIKEMSCIAED), 283–320 (KELAPAVSVLQLFCSSPKAALRYAAVRTLNKVAMKHPS), 322–355 (VTACNLDLENLVTDSNRSIATLAITTLLKTGSES), and 356–392 (SIDRLMKQISSFMSEISDEFKVVVVQAISALCQKYPR). Position 594 is a phosphothreonine (Thr-594). The segment at 609–874 (RQEIFQEQLA…PVDIILASVG (266 aa)) is interaction with ZNF289/ARFGAP2.

This sequence belongs to the COPG family. Oligomeric complex that consists of at least the alpha, beta, beta', gamma, delta, epsilon and zeta subunits. Interacts with ZNF289/ARFGAP2 through its C-terminal appendage domain. Interacts with EGFR upon EGF treatment; interaction is essential for regulation of EGF-dependent nuclear transport of EGFR by retrograde trafficking from the Golgi to the ER. The coatomer interacts with KDEL receptors; the interaction is important for retrograde trafficking of KDEL-bearing proteins from the Golgi to the endoplasmic reticulum. Interacts with COPB1. Interacts with TMED10 (via C-terminus). Interacts with TMED2, TMED3, TMED7 and TMED9.

It localises to the cytoplasm. Its subcellular location is the cytosol. The protein resides in the golgi apparatus membrane. The protein localises to the cytoplasmic vesicle. It is found in the COPI-coated vesicle membrane. In terms of biological role, the coatomer is a cytosolic protein complex that binds to dilysine motifs and reversibly associates with Golgi non-clathrin-coated vesicles, which further mediate biosynthetic protein transport from the ER, via the Golgi up to the trans Golgi network. Coatomer complex is required for budding from Golgi membranes, and is essential for the retrograde Golgi-to-ER transport of dilysine-tagged proteins. In mammals, the coatomer can only be recruited by membranes associated to ADP-ribosylation factors (ARFs), which are small GTP-binding proteins; the complex also influences the Golgi structural integrity, as well as the processing, activity, and endocytic recycling of LDL receptors. Required for limiting lipid storage in lipid droplets. Involved in lipid homeostasis by regulating the presence of perilipin family members PLIN2 and PLIN3 at the lipid droplet surface and promoting the association of adipocyte triglyceride lipase (PNPLA2) with the lipid droplet surface to mediate lipolysis. This is Coatomer subunit gamma-1 (Copg1) from Mus musculus (Mouse).